The chain runs to 663 residues: Cytochrome bo(3) ubiquinol oxidase subunit 1 (663 aa).

Over 1 to 16 (MFGKLSLDAVPFHEPI) the chain is Periplasmic. The chain crosses the membrane as a helical span at residues 17–35 (VMVTIAGIILGGLALVGLI). The Cytoplasmic portion of the chain corresponds to 36 to 52 (TYFGKWTYLWKEWLTSV). A helical transmembrane segment spans residues 53 to 80 (DHKRLGIMYIIVAIVMLLRGFADAIMMR). 2 residues coordinate ubiquinone-8: Arg71 and Asp75. Residues 81–95 (SQQALASAGEAGFLP) are Periplasmic-facing. The helical transmembrane segment at 96-132 (PHHYDQIFTAHGVIMIFFVAMPFVIGLMNLVVPLQIG) threads the bilayer. Residue His98 participates in ubiquinone-8 binding. His106 is a heme b binding site. Over 133-137 (ARDVA) the chain is Cytoplasmic. Residues 138 to 161 (FPFLNNLSFWFTVVGVILVNVSLG) form a helical membrane-spanning segment. Over 162–184 (VGEFAQTGWLAYPPLSGIEYSPG) the chain is Periplasmic. Trp170 lines the heme b pocket. The helical transmembrane segment at 185 to 215 (VGVDYWIWSLQLSGIGTTLTGINFFVTILKM) threads the bilayer. Residues 216–224 (RAPGMTMFK) are Cytoplasmic-facing. Residues 225–260 (MPVFTWASLCANVLIIASFPILTVTVALLTLDRYLG) traverse the membrane as a helical segment. Topologically, residues 261 to 270 (THFFTNDMGG) are periplasmic. A helical membrane pass occupies residues 271–307 (NMMMYINLIWAWGHPEVYILILPVFGVFSEIAATFSR). His284 is a Cu(2+) binding site. Positions 284–288 (HPEVY) form a cross-link, 1'-histidyl-3'-tyrosine (His-Tyr). Tyr288 provides a ligand contact to Fe(II)-heme o. Over 308–311 (KRLF) the chain is Cytoplasmic. A helical transmembrane segment spans residues 312–326 (GYTSLVWATVCITVL). The Periplasmic segment spans residues 327 to 340 (SFIVWLHHFFTMGA). The Cu(2+) site is built by His333 and His334. Residues 341-369 (GANVNAFFGITTMIIAIPTGVKIFNWLFT) traverse the membrane as a helical segment. The Cytoplasmic segment spans residues 370–377 (MYQGRIVF). A helical membrane pass occupies residues 378–409 (HSAMLWTIGFIVTFSVGGMTGVLLAVPGADFV). Residues 410 to 412 (LHN) are Periplasmic-facing. Fe(II)-heme o-binding residues include His411 and His419. A helical membrane pass occupies residues 413 to 445 (SLFLIAHFHNVIIGGVVFGCFAGMTYWWPKAFG). His421 lines the heme b pocket. Residues 446–448 (FKL) lie on the Cytoplasmic side of the membrane. A helical transmembrane segment spans residues 449 to 477 (NETWGKRAFWFWIIGFFVAFMPLYALGFM). The Periplasmic segment spans residues 478–489 (GMTRRLSQQIDP). Heme b is bound by residues Arg481 and Arg482. The helical transmembrane segment at 490–521 (QFHTMLMIAASGAVLIALGILCLVIQMYVSIR) threads the bilayer. Residues 522–587 (DRDQNRDLTG…DHYEEIHMPK (66 aa)) lie on the Cytoplasmic side of the membrane. A helical transmembrane segment spans residues 588-606 (NSGAGIVIAAFSTIFGFAM). Over 607–613 (IWHIWWL) the chain is Periplasmic. A helical transmembrane segment spans residues 614-632 (AIVGFAGMIITWIVKSFDE). The Cytoplasmic segment spans residues 633–663 (DVDYYVPVAEIEKLENQHFDEITKAGLKNGN).

Belongs to the heme-copper respiratory oxidase family. In terms of assembly, the cytochrome bo(3) ubiquinol oxidase complex is a heterooctamer of two A chains, two B chains, two C chains and two D chains. Cu(2+) serves as cofactor. Heme b is required as a cofactor. It depends on Fe(II)-heme o as a cofactor.

Its subcellular location is the cell inner membrane. The enzyme catalyses 2 a ubiquinol + O2 + n H(+)(in) = 2 a ubiquinone + 2 H2O + n H(+)(out). In terms of biological role, cytochrome bo(3) ubiquinol oxidase is the terminal enzyme in the aerobic respiratory chain of E.coli that predominates when cells are grown at high aeration. Catalyzes the four-electron reduction of O2 to water, using a ubiquinol as a membrane soluble electron donor for molecular oxygen reduction; ubiquinol-8 is the natural substrate for E.coli. Has proton pump activity across the membrane in addition to electron transfer, pumping 2 protons/electron and generating a proton motive force. All the redox centers of this enzyme complex are located within the largest subunit, subunit I. Protons are probably pumped via D- and K- channels found in this subunit. The protein is Cytochrome bo(3) ubiquinol oxidase subunit 1 (cyoB) of Escherichia coli O157:H7.